Consider the following 471-residue polypeptide: Variant surface glycoprotein ILTAT 1.1BC (471 aa).

The first 21 residues, 1–21, serve as a signal peptide directing secretion; sequence MVKAIASLMLLHIWAIEEIKA. Asparagine 130 carries N-linked (GlcNAc...) asparagine glycosylation. The segment covering 158–168 has biased composition (polar residues); it reads TVSKTTECNTE. Disordered stretches follow at residues 158–183 and 204–232; these read TVSK…TLSK and GGAC…TTAS. Basic and acidic residues predominate over residues 214–226; the sequence is DKIHITNETDSKN. N-linked (GlcNAc...) asparagine glycans are attached at residues asparagine 220 and asparagine 260. Intrachain disulfides connect cysteine 397–cysteine 410 and cysteine 406–cysteine 421. Positions 432–454 are disordered; sequence AEQAATNQETEGKDGKTTNTTGS. An N-linked (GlcNAc...) asparagine glycan is attached at asparagine 450. Serine 454 carries the GPI-anchor amidated serine lipid modification. Residues 455-471 constitute a propeptide, removed in mature form; sequence NSFLINKAPVLLAFLLL.

It localises to the cell membrane. VSG forms a coat on the surface of the parasite. The trypanosome evades the immune response of the host by expressing a series of antigenically distinct VSGs from an estimated 1000 VSG genes. The sequence is that of Variant surface glycoprotein ILTAT 1.1BC from Trypanosoma brucei brucei.